The sequence spans 1250 residues: MEASRRFPEAEALSPEQAAHYLRYVKEAKEATKNGDLEEAFKLFNLAKDIFPNEKVLSRIQKIQEALEELAEQGDDEFTDVCNSGLLLYRELHNQLFEHQKEGIAFLYSLYRDGRKGGILADDMGLGKTVQIIAFLSGMFDASLVNHVLLIMPTNLINTWVKEFIKWTPGMRVKTFHGPSKDERTRNLNRIQQRNGVIITTYQMLINNWQQLSSFRGQEFVWDYVILDEAHKIKTSSTKSAICARAIPASNRLLLTGTPIQNNLQELWSLFDFACQGSLLGTLKTFKMEYENPITRAREKDATPGEKALGFKISENLMAIIKPYFLRRTKEDVQKKKSSNPEARLNEKNPDVDAICEMPSLSRKNDLIIWIRLVPLQEEIYRKFVSLDHIKELLMETRSPLAELGVLKKLCDHPRLLSARACCLLNLGTFSAQDGNEGEDSPDVDHIDQVTDDTLMEESGKMIFLMDLLKRLRDEGHQTLVFSQSRQILNIIERLLKNRHFKTLRIDGTVTHLLEREKRINLFQQNKDYSVFLLTTQVGGVGLTLTAATRVVIFDPSWNPATDAQAVDRVYRIGQKENVVVYRLITCGTVEEKIYRRQVFKDSLIRQTTGEKKNPFRYFSKQELRELFTIEDLQNSVTQLQLQSLHAAQRKSDIKLDEHIAYLQSLGIAGISDHDLMYTCDLSVKEELDVVEESHYIQQRVQKAQFLVEFESQNKEFLMEQQRTRNEGAWLREPVFPSSTKKKCPKLNKPQPQPSPLLSTHHTQEEDISSKMASVVIDDLPKEGEKQDLSSIKVNVTTLQDGKGTGSADSIATLPKGFGSVEELCTNSSLGMEKSFATKNEAVQKETLQEGPKQEALQEDPLESFNYVLSKSTKADIGPNLDQLKDDEILRHCNPWPIISITNESQNAESNVSIIEIADDLSASHSALQDAQASEAKLEEEPSASSPQYACDFNLFLEDSADNRQNFSSQSLEHVEKENSLCGSAPNSRAGFVHSKTCLSWEFSEKDDEPEEVVVKAKIRSKARRIVSDGEDEDDSFKDTSSINPFNTSLFQFSSVKQFDASTPKNDISPPGRFFSSQIPSSVNKSMNSRRSLASRRSLINMVLDHVEDMEERLDDSSEAKGPEDYPEEGVEESSGEASKYTEEDPSGETLSSENKSSWLMTSKPSALAQETSLGAPEPLSGEQLVGSPQDKAAEATNDYETLVKRGKELKECGKIQEALNCLVKALDIKSADPEVMLLTLSLYKQLNNN.

Position 14 is a phosphoserine (Ser-14). A TPR 1 repeat occupies 21–54; that stretch reads YLRYVKEAKEATKNGDLEEAFKLFNLAKDIFPNE. Positions 109 to 277 constitute a Helicase ATP-binding domain; the sequence is SLYRDGRKGG…WSLFDFACQG (169 aa). 122-129 provides a ligand contact to ATP; that stretch reads DDMGLGKT. A DEAH box motif is present at residues 228 to 231; the sequence is DEAH. The 157-residue stretch at 464–620 folds into the Helicase C-terminal domain; it reads FLMDLLKRLR…EKKNPFRYFS (157 aa). The tract at residues 735–768 is disordered; sequence VFPSSTKKKCPKLNKPQPQPSPLLSTHHTQEEDI. 4 positions are modified to phosphoserine: Ser-755, Ser-774, Ser-807, and Ser-810. Thr-813 bears the Phosphothreonine mark. Ser-820 is modified (phosphoserine). The segment at 926-946 is disordered; sequence SALQDAQASEAKLEEEPSASS. Phosphoserine is present on residues Ser-969, Ser-971, Ser-995, Ser-1004, and Ser-1028. The disordered stretch occupies residues 1061–1092; sequence ASTPKNDISPPGRFFSSQIPSSVNKSMNSRRS. Thr-1063 is modified (phosphothreonine; by PLK1). Ser-1069 is subject to Phosphoserine. Polar residues predominate over residues 1075–1087; the sequence is FSSQIPSSVNKSM. 2 positions are modified to phosphoserine: Ser-1098 and Ser-1118. Residues 1110 to 1199 form a disordered region; that stretch reads MEERLDDSSE…QDKAAEATND (90 aa). A compositionally biased stretch (basic and acidic residues) spans 1115-1124; that stretch reads DDSSEAKGPE. Positions 1125–1135 are enriched in acidic residues; that stretch reads DYPEEGVEESS. Residues 1149–1173 are compositionally biased toward polar residues; it reads ETLSSENKSSWLMTSKPSALAQETS. 2 positions are modified to phosphoserine: Ser-1181 and Ser-1188. The stretch at 1200-1233 is one TPR 2 repeat; the sequence is YETLVKRGKELKECGKIQEALNCLVKALDIKSAD.

This sequence belongs to the SNF2/RAD54 helicase family. As to quaternary structure, interacts with PLK1, which phosphorylates it. Both proteins are mutually dependent on each other for correct subcellular localization. Interacts (via N-terminal TPR repeat) with BEND3 (via BEN domains 1 and 3); the interaction is direct. Phosphorylation by PLK1 prevents the association with chromosome arms and restricts its localization to the kinetochore-centromere region.

It localises to the chromosome. The protein localises to the centromere. Its subcellular location is the kinetochore. It catalyses the reaction ATP + H2O = ADP + phosphate + H(+). In terms of biological role, DNA helicase that acts as a tension sensor that associates with catenated DNA which is stretched under tension until it is resolved during anaphase. Functions as ATP-dependent DNA translocase. Can promote Holliday junction branch migration (in vitro). The protein is DNA excision repair protein ERCC-6-like (ERCC6L) of Homo sapiens (Human).